The sequence spans 366 residues: 3-dehydroquinate synthase (366 aa).

NAD(+) contacts are provided by residues 74 to 79 (SGEAAK), 108 to 112 (GVVGD), 132 to 133 (TT), Lys-144, Lys-153, and 171 to 174 (FLRT). Zn(2+)-binding residues include Glu-186, His-249, and His-266.

Belongs to the sugar phosphate cyclases superfamily. Dehydroquinate synthase family. Requires Co(2+) as cofactor. The cofactor is Zn(2+). NAD(+) serves as cofactor.

Its subcellular location is the cytoplasm. The enzyme catalyses 7-phospho-2-dehydro-3-deoxy-D-arabino-heptonate = 3-dehydroquinate + phosphate. Its pathway is metabolic intermediate biosynthesis; chorismate biosynthesis; chorismate from D-erythrose 4-phosphate and phosphoenolpyruvate: step 2/7. Its function is as follows. Catalyzes the conversion of 3-deoxy-D-arabino-heptulosonate 7-phosphate (DAHP) to dehydroquinate (DHQ). This Geobacillus thermodenitrificans (strain NG80-2) protein is 3-dehydroquinate synthase.